Reading from the N-terminus, the 496-residue chain is Probable glycine dehydrogenase (decarboxylating) subunit 2 (496 aa).

Lys265 carries the post-translational modification N6-(pyridoxal phosphate)lysine.

This sequence belongs to the GcvP family. C-terminal subunit subfamily. As to quaternary structure, the glycine cleavage system is composed of four proteins: P, T, L and H. In this organism, the P 'protein' is a heterodimer of two subunits. The cofactor is pyridoxal 5'-phosphate.

The catalysed reaction is N(6)-[(R)-lipoyl]-L-lysyl-[glycine-cleavage complex H protein] + glycine + H(+) = N(6)-[(R)-S(8)-aminomethyldihydrolipoyl]-L-lysyl-[glycine-cleavage complex H protein] + CO2. The glycine cleavage system catalyzes the degradation of glycine. The P protein binds the alpha-amino group of glycine through its pyridoxal phosphate cofactor; CO(2) is released and the remaining methylamine moiety is then transferred to the lipoamide cofactor of the H protein. The sequence is that of Probable glycine dehydrogenase (decarboxylating) subunit 2 from Thioalkalivibrio sulfidiphilus (strain HL-EbGR7).